The following is a 373-amino-acid chain: Nuclear hormone receptor family member nhr-69 (373 aa).

Residues Glu3 to Asn78 constitute a DNA-binding region (nuclear receptor). NR C4-type zinc fingers lie at residues Cys6–Cys26 and Cys42–Cys66. One can recognise an NR LBD domain in the interval Glu93–Asp344.

This sequence belongs to the nuclear hormone receptor family. As to quaternary structure, interacts with R-SMAD daf-8. Expressed in the ASI neurons, hypodermis, and in tail neurons.

The protein localises to the nucleus. Its function is as follows. Orphan nuclear receptor which, in cooperation with R-SMAD daf-8, modulates the Insulin/IGF-1-like signaling (IIS) pathway, perhaps by regulating expression of the potassium channel exp-2, which in turn modulates the secretion of insulin-like peptide daf-28. This chain is Nuclear hormone receptor family member nhr-69 (nhr-69), found in Caenorhabditis elegans.